The chain runs to 419 residues: Transcription termination factor Rho (419 aa).

The Rho RNA-BD domain maps to 48-123 (DIFGDGVLEI…LKVNEVNFDK (76 aa)). RNA-binding stretches follow at residues 61–66 (GFGFLR), 78–80 (DIY), and 108–110 (ERY). ATP-binding positions include 169-174 (GRGQRG), 181-186 (KAGKTM), and Arg-212. The segment at 284–288 (VLTGG) is RNA-binding 2.

The protein belongs to the Rho family. As to quaternary structure, homohexamer. The homohexamer assembles into an open ring structure.

Facilitates transcription termination by a mechanism that involves Rho binding to the nascent RNA, activation of Rho's RNA-dependent ATPase activity, and release of the mRNA from the DNA template. The chain is Transcription termination factor Rho from Escherichia coli O157:H7.